A 366-amino-acid chain; its full sequence is Putative actin-9 (366 aa).

This sequence belongs to the actin family. Polymerization of globular actin (G-actin) leads to a structural filament (F-actin) in the form of a two-stranded helix. The binding of profilin to monomeric G-actin cause the sequestration of actin into profilactin complexes, and prevents the polymerization.

The protein resides in the cytoplasm. The protein localises to the cytoskeleton. Its function is as follows. Actins are highly conserved proteins that are involved in various types of cell motility and are ubiquitously expressed in all eukaryotic cells. Essential component of cell cytoskeleton; plays an important role in cytoplasmic streaming, cell shape determination, cell division, organelle movement and extension growth. In Arabidopsis thaliana (Mouse-ear cress), this protein is Putative actin-9 (ACT9).